The sequence spans 355 residues: S-adenosylmethionine:tRNA ribosyltransferase-isomerase (355 aa).

The protein belongs to the QueA family. Monomer.

The protein localises to the cytoplasm. It carries out the reaction 7-aminomethyl-7-carbaguanosine(34) in tRNA + S-adenosyl-L-methionine = epoxyqueuosine(34) in tRNA + adenine + L-methionine + 2 H(+). It functions in the pathway tRNA modification; tRNA-queuosine biosynthesis. In terms of biological role, transfers and isomerizes the ribose moiety from AdoMet to the 7-aminomethyl group of 7-deazaguanine (preQ1-tRNA) to give epoxyqueuosine (oQ-tRNA). This chain is S-adenosylmethionine:tRNA ribosyltransferase-isomerase, found in Burkholderia cenocepacia (strain ATCC BAA-245 / DSM 16553 / LMG 16656 / NCTC 13227 / J2315 / CF5610) (Burkholderia cepacia (strain J2315)).